Here is a 126-residue protein sequence, read N- to C-terminus: Holo-[acyl-carrier-protein] synthase (126 aa).

Mg(2+) is bound by residues aspartate 8 and glutamate 57.

It belongs to the P-Pant transferase superfamily. AcpS family. It depends on Mg(2+) as a cofactor.

Its subcellular location is the cytoplasm. The enzyme catalyses apo-[ACP] + CoA = holo-[ACP] + adenosine 3',5'-bisphosphate + H(+). In terms of biological role, transfers the 4'-phosphopantetheine moiety from coenzyme A to a Ser of acyl-carrier-protein. The protein is Holo-[acyl-carrier-protein] synthase of Trichlorobacter lovleyi (strain ATCC BAA-1151 / DSM 17278 / SZ) (Geobacter lovleyi).